We begin with the raw amino-acid sequence, 229 residues long: Urease accessory protein UreG (229 aa).

Residues 1–15 (MPPHFIDGEPHDHQH) show a composition bias toward basic and acidic residues. The interval 1 to 20 (MPPHFIDGEPHDHQHDRPRR) is disordered. 34 to 41 (GPVGSGKT) contributes to the GTP binding site.

The protein belongs to the SIMIBI class G3E GTPase family. UreG subfamily. Homodimer. UreD, UreF and UreG form a complex that acts as a GTP-hydrolysis-dependent molecular chaperone, activating the urease apoprotein by helping to assemble the nickel containing metallocenter of UreC. The UreE protein probably delivers the nickel.

It is found in the cytoplasm. Facilitates the functional incorporation of the urease nickel metallocenter. This process requires GTP hydrolysis, probably effectuated by UreG. The chain is Urease accessory protein UreG from Rhodococcus jostii (strain RHA1).